A 208-amino-acid chain; its full sequence is Large ribosomal subunit protein uL3 (208 aa).

The tract at residues 124-146 is disordered; it reads HGQSRGPMAHGSRYHRRPGSMGP.

This sequence belongs to the universal ribosomal protein uL3 family. In terms of assembly, part of the 50S ribosomal subunit. Forms a cluster with proteins L14 and L19.

Functionally, one of the primary rRNA binding proteins, it binds directly near the 3'-end of the 23S rRNA, where it nucleates assembly of the 50S subunit. This chain is Large ribosomal subunit protein uL3, found in Streptococcus thermophilus (strain ATCC BAA-491 / LMD-9).